Consider the following 78-residue polypeptide: MKLTCMMIVAVLFLTAWTFVTADDSRNGLKNLFPKARHEMKNPDASKLNKRDGCSNAGGFCGIHPGLCCSEICLVWCT.

Residues 1–22 (MKLTCMMIVAVLFLTAWTFVTA) form the signal peptide. Residues 23–53 (DDSRNGLKNLFPKARHEMKNPDASKLNKRDG) constitute a propeptide that is removed on maturation. 3 cysteine pairs are disulfide-bonded: Cys-54-Cys-69, Cys-61-Cys-73, and Cys-68-Cys-77.

The protein belongs to the conotoxin O1 superfamily. In terms of tissue distribution, expressed by the venom duct.

It localises to the secreted. Functionally, delta-conotoxins bind to site 6 of voltage-gated sodium channels (Nav) and inhibit the inactivation process. This Conus striatus (Striated cone) protein is Delta-conotoxin-like S6.8.